Reading from the N-terminus, the 2530-residue chain is Cullin-9 (2530 aa).

Residue Lys87 forms a Glycyl lysine isopeptide (Lys-Gly) (interchain with G-Cter in ubiquitin) linkage. One can recognise a CPH domain in the interval 367–440 (RSEFSSRSGY…HWHMLEILGP (74 aa)). 2 disordered regions span residues 585–639 (LPSS…KAQS) and 930–951 (RGSPERAVLETPSTQGQDGSPE). Residues 940–949 (TPSTQGQDGS) show a composition bias toward polar residues. At Ser978 the chain carries Phosphoserine. Positions 1145–1324 (PITIPFFDVF…RTCLFYTIRA (180 aa)) constitute a DOC domain. 1365-1372 (AAQALGKT) is an ATP binding site. Disordered regions lie at residues 1435–1468 (EAPPGPSPEPSSQPLSKNSKGQDGSPTPAPTPVC) and 1667–1690 (GDQEEWRPEKVEEDDEGQETGREL). Position 1459 is a phosphoserine (Ser1459). A Glycyl lysine isopeptide (Lys-Gly) (interchain with G-Cter in NEDD8) cross-link involves residue Lys1884. The tract at residues 2070-2287 (RPDQCPVCVT…KDYYNCSAMV (218 aa)) is TRIAD supradomain. Residues Cys2074, Cys2077, Cys2092, His2094, Cys2097, Cys2100, Cys2119, Cys2124, Cys2164, Cys2170, Cys2185, Cys2188, Cys2193, Cys2196, His2202, Cys2207, Cys2240, and Cys2243 each contribute to the Zn(2+) site. Residues 2074-2124 (CPVCVTPLGPHDDSPSLCCLHCCCKSCWNEYLTTRIEQNFVLNCTCPIADC) form an RING-type 1 zinc finger. The IBR-type zinc finger occupies 2144 to 2207 (SKYEKALLRG…FPEAHYPASC (64 aa)). The RING-type 2; atypical zinc finger occupies 2240–2269 (CPSCQAPIEKNEGCLHMTCARCNHGFCWRC). Residue Cys2253 is part of the active site. The Zn(2+) site is built by Cys2258, Cys2261, Cys2266, Cys2269, His2277, and Cys2283. Ser2440 bears the Phosphoserine mark. The tract at residues 2443–2530 (VETREVKGSN…DEDEDDESYD (88 aa)) is disordered. A compositionally biased stretch (polar residues) spans 2452–2462 (NVPSDQPQGSS). Positions 2459-2500 (QGSSGLEVEDEEEEEEEEEEEEEEEEEDVPEWQHEFDEELDN) form a coiled coil. Acidic residues-rich tracts occupy residues 2465–2510 (EVED…EESE) and 2520–2530 (GDEDEDDESYD).

It belongs to the cullin family. As to quaternary structure, component of a Cul9-RING complex consisting of CUL9 and RBX1; the CUL9-RBX1 complex is a heterododecamer composed of six CUL9 and six RBX1 protomers. Interacts (via C-terminal TRIAD/RBR supradomain) with E2 ubiquitin-conjugating enzyme UBE2L3. Interacts with CUL7; the interaction with the CUL7 component of the 3M complex leads to inhibition of CUL9 activity. The CUL7-CUL9 heterodimer seems to interact specifically with TP53, likely via the CPH domain. Forms a complex with p53/TP53 in the cytoplasm of unstressed cells. Interacts with UBCH7 and UBCH8. Autoubiquitinated by the CUL9-RBX1 complex at Lys-87. Post-translationally, neddylated. Neddylation is mediated by E1 enzyme UBA3-NAE1 complex and E2 enzyme UBE2F. Structural rearrangment of the C-terminal TRIAD/RBR supradomain may play a role in neddylation and deneddylation.

The protein localises to the cytoplasm. Core component of the Cul9-RING ubiquitin-protein ligase complex composed of CUL9 and RBX1. The CUL9-RBX1 complex mediates ubiquitination and subsequent degradation of BIRC5 and is required to maintain microtubule dynamics and genome integrity. Acts downstream of the 3M complex, which inhibits CUL9 activity and the ubiquitination of BIRC5. The CUL9-RBX1 complex also mediates mono-ubiquitination of p53/TP53. Acts as a cytoplasmic anchor protein in p53/TP53-associated protein complex. Regulates the subcellular localization of p53/TP53 and its subsequent function. Ubiquitinates apurinic/apyrimidinic endodeoxyribonuclease APEX2. Ubiquitination by the CUL9-RBX1 complex is predominantly mediated by E2 ubiquitin-conjugating enzymes UBE2L3 and UBE2D2. This is Cullin-9 (Cul9) from Mus musculus (Mouse).